The sequence spans 416 residues: Serine hydroxymethyltransferase (416 aa).

(6S)-5,6,7,8-tetrahydrofolate-binding positions include Leu-118 and 122 to 124 (GHL). The residue at position 226 (Lys-226) is an N6-(pyridoxal phosphate)lysine. (6S)-5,6,7,8-tetrahydrofolate-binding positions include Glu-242 and 350-352 (SPF).

It belongs to the SHMT family. In terms of assembly, homodimer. Pyridoxal 5'-phosphate is required as a cofactor.

Its subcellular location is the cytoplasm. The catalysed reaction is (6R)-5,10-methylene-5,6,7,8-tetrahydrofolate + glycine + H2O = (6S)-5,6,7,8-tetrahydrofolate + L-serine. It participates in one-carbon metabolism; tetrahydrofolate interconversion. The protein operates within amino-acid biosynthesis; glycine biosynthesis; glycine from L-serine: step 1/1. Its function is as follows. Catalyzes the reversible interconversion of serine and glycine with tetrahydrofolate (THF) serving as the one-carbon carrier. This reaction serves as the major source of one-carbon groups required for the biosynthesis of purines, thymidylate, methionine, and other important biomolecules. Also exhibits THF-independent aldolase activity toward beta-hydroxyamino acids, producing glycine and aldehydes, via a retro-aldol mechanism. This is Serine hydroxymethyltransferase from Helicobacter hepaticus (strain ATCC 51449 / 3B1).